The following is a 168-amino-acid chain: D-aminoacyl-tRNA deacylase 2 (168 aa).

The short motif at 160–161 (GP) is the Gly-transPro motif, allows the protein to recognize chirality of D-amino acids element.

The protein belongs to the DTD family. Homodimer.

The protein resides in the cytoplasm. The enzyme catalyses a D-aminoacyl-tRNA + H2O = a tRNA + a D-alpha-amino acid + H(+). The catalysed reaction is glycyl-tRNA(Ala) + H2O = tRNA(Ala) + glycine + H(+). It catalyses the reaction D-tyrosyl-tRNA(Tyr) + H2O = D-tyrosine + tRNA(Tyr). It carries out the reaction L-alanyl-tRNA(Thr) + H2O = tRNA(Thr) + L-alanine + H(+). Deacylates mischarged D-aminoacyl-tRNAs. Also deacylates mischarged glycyl-tRNA(Ala), protecting cells against glycine mischarging by AlaRS. Probably acts by rejecting L-amino acids from its binding site rather than specific recognition of D-amino acids. Catalyzes the hydrolysis of D-tyrosyl-tRNA(Tyr), has no activity on correctly charged L-tyrosyl-tRNA(Tyr). By recycling D-aminoacyl-tRNA to D-amino acids and free tRNA molecules, this enzyme counteracts the toxicity associated with the formation of D-aminoacyl-tRNA entities in vivo and helps enforce protein L-homochirality. In contrast to DTD1, deacylates L-Ala mischarged on tRNA(Thr)(G4.U69) by alanine-tRNA ligase AARS. Can deacylate L-Ala due to a relaxed specificity for substrate chirality caused by the trans conformation of the Gly-Pro motif in the active site. Also hydrolyzes correctly charged, achiral, glycyl-tRNA(Gly) in vitro, although in vivo EEF1A1/EF-Tu may protect cognate achiral glycyl-tRNA(Gly) from DTD2-mediated deacetylation. In Homo sapiens (Human), this protein is D-aminoacyl-tRNA deacylase 2 (DTD2).